Here is a 261-residue protein sequence, read N- to C-terminus: MHPFRRRVRPAVEAMPEVEISEEGNIRSLHLGSETIQSSMDLDDPPDLVLSYSRAMMGFLLWNDDPKHILQIGLGGGSFARFIDEYLPDAVSVAVDINPQVIAVARAFFQLPEEGDFFEIVEADGADYVKIFRGSTDAILVDGFDGLQIVDALTTEDFFEDCKRALSPKGVFVTNWWSGDKRYQSFIERLLNVFEGRVIELPAATHGNVAVMAFRQSPSLTQWEALRKRADELEGRFGLEFGEFVNRLKQTNQQTAGHLLI.

The PABS domain occupies 1–219 (MHPFRRRVRP…AVMAFRQSPS (219 aa)). Residues Asp96 and 124–125 (DG) each bind S-methyl-5'-thioadenosine. Asp142 serves as the catalytic Proton acceptor.

It belongs to the spermidine/spermine synthase family. Homodimer or homotetramer.

The protein localises to the cytoplasm. The catalysed reaction is S-adenosyl 3-(methylsulfanyl)propylamine + putrescine = S-methyl-5'-thioadenosine + spermidine + H(+). The protein operates within amine and polyamine biosynthesis; spermidine biosynthesis; spermidine from putrescine: step 1/1. In terms of biological role, catalyzes the irreversible transfer of a propylamine group from the amino donor S-adenosylmethioninamine (decarboxy-AdoMet) to putrescine (1,4-diaminobutane) to yield spermidine. The protein is Polyamine aminopropyltransferase of Chromobacterium violaceum (strain ATCC 12472 / DSM 30191 / JCM 1249 / CCUG 213 / NBRC 12614 / NCIMB 9131 / NCTC 9757 / MK).